We begin with the raw amino-acid sequence, 254 residues long: Translation initiation factor 2 subunit alpha (254 aa).

In terms of domain architecture, S1 motif spans 10–81 (GDLVVVKITE…ERKNVDLSLK (72 aa)).

This sequence belongs to the eIF-2-alpha family. In terms of assembly, heterotrimer composed of an alpha, a beta and a gamma chain.

Its function is as follows. eIF-2 functions in the early steps of protein synthesis by forming a ternary complex with GTP and initiator tRNA. The chain is Translation initiation factor 2 subunit alpha from Thermoplasma volcanium (strain ATCC 51530 / DSM 4299 / JCM 9571 / NBRC 15438 / GSS1).